Reading from the N-terminus, the 704-residue chain is Protein arginine N-methyltransferase 7 (704 aa).

2 SAM-dependent MTase PRMT-type domains span residues 14–356 and 366–704; these read ENTW…YSLW and SQPA…EKSE.

The protein belongs to the class I-like SAM-binding methyltransferase superfamily. Protein arginine N-methyltransferase family. PRMT7 subfamily.

Essential arginine methyltransferase that can both catalyze the formation of omega-N monomethylarginine (MMA) and symmetrical dimethylarginine (sDMA). Specifically mediates the symmetrical dimethylation of arginine residues in the small nuclear ribonucleoproteins SmD1 and SmD3. This is Protein arginine N-methyltransferase 7 (Art7) from Drosophila grimshawi (Hawaiian fruit fly).